The sequence spans 575 residues: MMKLRHKNKKPGKGSKGCKKPAKQNGKKAATKVAYSPQFFHSNDHASREAELKKKRVGEMREKQQAAREQERHRRRTIESYCQDVLRRQEEFEHKEEVLQELNMFPQLDDEATRKAYYKEFHKVVEYSDVILEVLDSRDPLGCRCFQMEETVLRAEGNKKLVLVLNKIDLVPKEVVEKWLEYLRNELPTVAFKASTQHQVKNLNRCSVPVDQASESLLKSKACFGAENLMRVLGNYCRLGEVRTHIRVGVVGLPNVGKSSLINSLKRSRACSVGAVPGVTKFMQEVYLDKFIRLLDAPGIVPGPNSEVGTILRNCIHVQKLADPVTPVETILQRCNLEEISSYYGVSGFQTTEHFLTAVAHRLGKKKKGGIYSQEQAAKAVLADWVSGKISFYTLPPSTHTLPTHLSAEIVKEMTEVFDIEDTEQANEDTMECLATGESDELLGDMDPLEMEIKWLHSPMVKIADAMENKTTVYKIGDLTGYCTNPNRHQMGWAKRNVDLHPRNNSMVDVCPVDRRPVLQRIMETDPLQQGQALASALKKKKKIQKRADKLASKLSDSMMSALDLSGNADDSAGD.

Residues 1–30 (MMKLRHKNKKPGKGSKGCKKPAKQNGKKAA) show a composition bias toward basic residues. The interval 1–75 (MMKLRHKNKK…AAREQERHRR (75 aa)) is disordered. Residues 9–28 (KKPGKGSKGCKKPAKQNGKK) form a required for nucleolar localization region. Over residues 42–72 (SNDHASREAELKKKRVGEMREKQQAAREQER) the composition is skewed to basic and acidic residues. The stretch at 51–79 (ELKKKRVGEMREKQQAAREQERHRRRTIE) forms a coiled coil. Residues 118–303 (YKEFHKVVEY…LLDAPGIVPG (186 aa)) form the CP-type G domain. GTP-binding positions include 166 to 169 (NKID), 252 to 259 (GLPNVGKS), and 296 to 299 (DAPG). Lys470 is covalently cross-linked (Glycyl lysine isopeptide (Lys-Gly) (interchain with G-Cter in SUMO1)).

It belongs to the TRAFAC class YlqF/YawG GTPase family. As to quaternary structure, interacts with MDM2; this interaction, which occurs in the nucleoplasm, stabilizes MDM2. Indirectly interacts with TP53, via MDM2-binding. Interacts with TERF1; this interaction probably occurs in the nucleoplasm and is increased during mitosis, when the nucleolus is disassembled. This binding may promote TERF1 homodimerization. Interacts with TERT.

The protein localises to the nucleus. The protein resides in the nucleolus. Its function is as follows. Stabilizes TERF1 telomeric association by preventing TERF1 recruitment by PML. Stabilizes TERF1 protein by preventing its ubiquitination and hence proteasomal degradation. Does so by interfering with TERF1-binding to FBXO4 E3 ubiquitin-protein ligase. Required for cell proliferation. By stabilizing TRF1 protein during mitosis, promotes metaphase-to-anaphase transition. Stabilizes MDM2 protein by preventing its ubiquitination, and hence proteasomal degradation. By acting on MDM2, may affect TP53 activity. Required for normal processing of ribosomal pre-rRNA. Binds GTP. The protein is Guanine nucleotide-binding protein-like 3-like protein (GNL3L) of Bos taurus (Bovine).